The primary structure comprises 337 residues: Heme A synthase (337 aa).

Helical transmembrane passes span 6 to 26 (ITKW…IGGI), 87 to 107 (FIHR…VIYF), 119 to 139 (LPYI…WYMV), 154 to 174 (LAFH…QLIK), and 192 to 212 (LIFS…GALV). Residue H256 participates in heme binding. Helical transmembrane passes span 258–278 (LVGY…LKIE), 285–305 (IAYF…ITLL), and 308–328 (VPII…SVII). H316 provides a ligand contact to heme.

Belongs to the COX15/CtaA family. Type 2 subfamily. Interacts with CtaB. Heme b serves as cofactor.

Its subcellular location is the cell membrane. The catalysed reaction is Fe(II)-heme o + 2 A + H2O = Fe(II)-heme a + 2 AH2. Its pathway is porphyrin-containing compound metabolism; heme A biosynthesis; heme A from heme O: step 1/1. Catalyzes the conversion of heme O to heme A by two successive hydroxylations of the methyl group at C8. The first hydroxylation forms heme I, the second hydroxylation results in an unstable dihydroxymethyl group, which spontaneously dehydrates, resulting in the formyl group of heme A. The protein is Heme A synthase of Rickettsia rickettsii (strain Iowa).